We begin with the raw amino-acid sequence, 1010 residues long: Regulator of telomere elongation helicase 1 homolog (1010 aa).

The Helicase ATP-binding domain maps to 7 to 333; sequence NGITVNFPFE…KEMLLQLEKT (327 aa). 42–49 lines the ATP pocket; it reads SPTGTGKT. Positions 157, 175, 184, and 220 each coordinate [4Fe-4S] cluster. Positions 263 to 266 match the DEAH box motif; the sequence is DEAH. Residues 912–931 form a disordered region; that stretch reads TSDDEDPGRTGDDPTRQAPE. The segment covering 918–931 has biased composition (basic and acidic residues); that stretch reads PGRTGDDPTRQAPE.

This sequence belongs to the helicase family. RAD3/XPD subfamily.

Its subcellular location is the nucleus. It carries out the reaction ATP + H2O = ADP + phosphate + H(+). A probable ATP-dependent DNA helicase implicated in DNA repair and the maintenance of genomic stability. Acts as an anti-recombinase to counteract toxic recombination and limit crossover during meiosis. Regulates meiotic recombination and crossover homeostasis by physically dissociating strand invasion events and thereby promotes noncrossover repair by meiotic synthesis dependent strand annealing (SDSA) as well as disassembly of D loop recombination intermediates. The sequence is that of Regulator of telomere elongation helicase 1 homolog from Aedes aegypti (Yellowfever mosquito).